Here is a 608-residue protein sequence, read N- to C-terminus: DNA mismatch repair protein MutL (608 aa).

The protein belongs to the DNA mismatch repair MutL/HexB family.

Functionally, this protein is involved in the repair of mismatches in DNA. It is required for dam-dependent methyl-directed DNA mismatch repair. May act as a 'molecular matchmaker', a protein that promotes the formation of a stable complex between two or more DNA-binding proteins in an ATP-dependent manner without itself being part of a final effector complex. This chain is DNA mismatch repair protein MutL, found in Anoxybacillus flavithermus (strain DSM 21510 / WK1).